We begin with the raw amino-acid sequence, 346 residues long: Methylthioribose-1-phosphate isomerase (346 aa).

Residues 48–50 (RGA), Arg-91, and Gln-196 each bind substrate. Asp-237 (proton donor) is an active-site residue. 247 to 248 (NK) is a binding site for substrate.

This sequence belongs to the eIF-2B alpha/beta/delta subunits family. MtnA subfamily.

The enzyme catalyses 5-(methylsulfanyl)-alpha-D-ribose 1-phosphate = 5-(methylsulfanyl)-D-ribulose 1-phosphate. Its pathway is amino-acid biosynthesis; L-methionine biosynthesis via salvage pathway; L-methionine from S-methyl-5-thio-alpha-D-ribose 1-phosphate: step 1/6. In terms of biological role, catalyzes the interconversion of methylthioribose-1-phosphate (MTR-1-P) into methylthioribulose-1-phosphate (MTRu-1-P). This Thermosipho melanesiensis (strain DSM 12029 / CIP 104789 / BI429) protein is Methylthioribose-1-phosphate isomerase.